Reading from the N-terminus, the 343-residue chain is Methionine import ATP-binding protein MetN (343 aa).

The region spanning 2 to 241 is the ABC transporter domain; it reads IKLSNITKVF…PKTPLAQKFI (240 aa). ATP is bound at residue 38 to 45; the sequence is GASGAGKS.

This sequence belongs to the ABC transporter superfamily. Methionine importer (TC 3.A.1.24) family. As to quaternary structure, the complex is composed of two ATP-binding proteins (MetN), two transmembrane proteins (MetI) and a solute-binding protein (MetQ).

It localises to the cell inner membrane. The enzyme catalyses L-methionine(out) + ATP + H2O = L-methionine(in) + ADP + phosphate + H(+). It carries out the reaction D-methionine(out) + ATP + H2O = D-methionine(in) + ADP + phosphate + H(+). Part of the ABC transporter complex MetNIQ involved in methionine import. Responsible for energy coupling to the transport system. This Escherichia coli O6:K15:H31 (strain 536 / UPEC) protein is Methionine import ATP-binding protein MetN.